A 203-amino-acid polypeptide reads, in one-letter code: WUSCHEL-related homeobox 3 (203 aa).

The segment at residues 4 to 68 (TPSTRWCPTP…NHKARERQRL (65 aa)) is a DNA-binding region (homeobox; WUS-type). Disordered regions lie at residues 73–95 (CARH…TAAA), 109–135 (LHHH…QQQQ), and 180–203 (STSG…TSTN). The span at 80–91 (PSPPSSTVPPAP) shows a compositional bias: pro residues. A compositionally biased stretch (basic residues) spans 109–118 (LHHHHHHHHP). Low complexity-rich tracts occupy residues 119 to 135 (YAAA…QQQQ) and 190 to 203 (CSSS…TSTN).

It belongs to the WUS homeobox family.

The protein localises to the nucleus. Functionally, transcription factor which may be involved in developmental processes. The chain is WUSCHEL-related homeobox 3 (WOX3) from Oryza sativa subsp. indica (Rice).